Here is a 351-residue protein sequence, read N- to C-terminus: V-type proton ATPase subunit d1 (351 aa).

This sequence belongs to the V-ATPase V0D/AC39 subunit family. In terms of assembly, V-ATPase is a heteromultimeric enzyme composed of a peripheral catalytic V1 complex (components A to H) attached to an integral membrane V0 proton pore complex (components: a, c, c'', d and e).

The protein localises to the vacuole membrane. Subunit of the integral membrane V0 complex of vacuolar ATPase. Vacuolar ATPase is responsible for acidifying a variety of intracellular compartments in eukaryotic cells, thus providing most of the energy required for transport processes in the vacuolar system. The sequence is that of V-type proton ATPase subunit d1 (VHA-d1) from Arabidopsis thaliana (Mouse-ear cress).